A 433-amino-acid chain; its full sequence is Serine--tRNA ligase (433 aa).

235-237 lines the L-serine pocket; it reads TSE. An ATP-binding site is contributed by 266–268; sequence RSE. Glu-289 is an L-serine binding site. An ATP-binding site is contributed by 353 to 356; that stretch reads EISS. L-serine is bound at residue Ser-388.

It belongs to the class-II aminoacyl-tRNA synthetase family. Type-1 seryl-tRNA synthetase subfamily. In terms of assembly, homodimer. The tRNA molecule binds across the dimer.

The protein localises to the cytoplasm. It carries out the reaction tRNA(Ser) + L-serine + ATP = L-seryl-tRNA(Ser) + AMP + diphosphate + H(+). It catalyses the reaction tRNA(Sec) + L-serine + ATP = L-seryl-tRNA(Sec) + AMP + diphosphate + H(+). Its pathway is aminoacyl-tRNA biosynthesis; selenocysteinyl-tRNA(Sec) biosynthesis; L-seryl-tRNA(Sec) from L-serine and tRNA(Sec): step 1/1. Its function is as follows. Catalyzes the attachment of serine to tRNA(Ser). Is also able to aminoacylate tRNA(Sec) with serine, to form the misacylated tRNA L-seryl-tRNA(Sec), which will be further converted into selenocysteinyl-tRNA(Sec). The protein is Serine--tRNA ligase of Burkholderia thailandensis (strain ATCC 700388 / DSM 13276 / CCUG 48851 / CIP 106301 / E264).